We begin with the raw amino-acid sequence, 370 residues long: Cyclin-A3-4 (370 aa).

Belongs to the cyclin family. Cyclin AB subfamily. As to quaternary structure, interacts with FZR2/CCS52A1, FZR1/CCS52A2 and FZR3/CCS52B.

This chain is Cyclin-A3-4 (CYCA3-4), found in Arabidopsis thaliana (Mouse-ear cress).